A 591-amino-acid polypeptide reads, in one-letter code: CTP synthase 1-B (591 aa).

One can recognise a Glutamine amidotransferase type-1 domain in the interval 300–554 (SIALVGKYTK…LASVGRLSQY (255 aa)). Catalysis depends on for GATase activity residues Cys-399, His-526, and Glu-528. Residues 562–572 (SPRDTYSDRSE) are compositionally biased toward basic and acidic residues. The tract at residues 562–581 (SPRDTYSDRSENSSPDAEIA) is disordered.

Belongs to the CTP synthase family.

It carries out the reaction UTP + L-glutamine + ATP + H2O = CTP + L-glutamate + ADP + phosphate + 2 H(+). The protein operates within pyrimidine metabolism; CTP biosynthesis via de novo pathway; CTP from UDP: step 2/2. Functionally, this enzyme is involved in the de novo synthesis of CTP, a precursor of DNA, RNA and phospholipids. Catalyzes the ATP-dependent amination of UTP to CTP with either L-glutamine or ammonia as a source of nitrogen. The polypeptide is CTP synthase 1-B (ctps1-b) (Xenopus laevis (African clawed frog)).